The chain runs to 450 residues: Probable 1,4-beta-D-glucan cellobiohydrolase C (450 aa).

Positions 1-19 (MKHLASSIALTLLLPAVQA) are cleaved as a signal peptide. The 36-residue stretch at 20–55 (QQTVWGQCGGQGWSGPTNCVAGAACSTLNPYYAQCI) folds into the CBM1 domain. Cystine bridges form between C27/C44 and C38/C54. Residues 59-90 (TATSTTLSTTTTTQTTTKPTTTGPTTSAPTVT) form a thr-rich linker region. The interval 63 to 89 (TTLSTTTTTQTTTKPTTTGPTTSAPTV) is disordered. Residues 91–450 (ASGNPFSGYQ…QLLTNANPSF (360 aa)) are catalytic. The active site involves D180. Intrachain disulfides connect C181–C240 and C372–C419. D226 functions as the Proton donor in the catalytic mechanism. D405 acts as the Nucleophile in catalysis. N409 is a glycosylation site (N-linked (GlcNAc...) asparagine).

Belongs to the glycosyl hydrolase 6 (cellulase B) family.

It localises to the secreted. It carries out the reaction Hydrolysis of (1-&gt;4)-beta-D-glucosidic linkages in cellulose and cellotetraose, releasing cellobiose from the non-reducing ends of the chains.. The biological conversion of cellulose to glucose generally requires three types of hydrolytic enzymes: (1) Endoglucanases which cut internal beta-1,4-glucosidic bonds; (2) Exocellobiohydrolases that cut the disaccharide cellobiose from the non-reducing end of the cellulose polymer chain; (3) Beta-1,4-glucosidases which hydrolyze the cellobiose and other short cello-oligosaccharides to glucose. In Neosartorya fischeri (strain ATCC 1020 / DSM 3700 / CBS 544.65 / FGSC A1164 / JCM 1740 / NRRL 181 / WB 181) (Aspergillus fischerianus), this protein is Probable 1,4-beta-D-glucan cellobiohydrolase C (cbhC).